Reading from the N-terminus, the 317-residue chain is MATH domain and coiled-coil domain-containing protein At3g58240 (317 aa).

In terms of domain architecture, MATH spans Asp6–Ile131. Positions Lys254–Asn305 form a coiled coil.

In Arabidopsis thaliana (Mouse-ear cress), this protein is MATH domain and coiled-coil domain-containing protein At3g58240.